Here is a 789-residue protein sequence, read N- to C-terminus: Glycerol-3-phosphate acyltransferase (789 aa).

The short motif at 276–281 (HRSYID) is the HXXXXD motif element.

The protein belongs to the GPAT/DAPAT family.

The protein localises to the cell membrane. It carries out the reaction sn-glycerol 3-phosphate + an acyl-CoA = a 1-acyl-sn-glycero-3-phosphate + CoA. It participates in phospholipid metabolism; CDP-diacylglycerol biosynthesis; CDP-diacylglycerol from sn-glycerol 3-phosphate: step 1/3. The chain is Glycerol-3-phosphate acyltransferase (plsB) from Mycobacterium tuberculosis (strain CDC 1551 / Oshkosh).